Here is a 371-residue protein sequence, read N- to C-terminus: L-lysine 4-hydroxylase (371 aa).

Fe cation is bound by residues H174, E176, and H310.

It belongs to the clavaminate synthase family. It depends on Fe(2+) as a cofactor.

The enzyme catalyses L-lysine + 2-oxoglutarate + O2 = (4R)-4-hydroxy-L-lysine + succinate + CO2. In terms of biological role, alpha-ketoglutarate-dependent dioxygenase that in vitro catalyzes the regio- and stereoselective hydroxylation of L-lysine, leading to (4R)-4-hydroxy-L-lysine. This Niastella koreensis (strain DSM 17620 / KACC 11465 / NBRC 106392 / GR20-10) protein is L-lysine 4-hydroxylase.